Consider the following 71-residue polypeptide: NAD(P)H-quinone oxidoreductase subunit O (71 aa).

The protein belongs to the complex I NdhO subunit family. In terms of assembly, NDH-1 can be composed of about 15 different subunits; different subcomplexes with different compositions have been identified which probably have different functions.

The protein resides in the cellular thylakoid membrane. The catalysed reaction is a plastoquinone + NADH + (n+1) H(+)(in) = a plastoquinol + NAD(+) + n H(+)(out). It catalyses the reaction a plastoquinone + NADPH + (n+1) H(+)(in) = a plastoquinol + NADP(+) + n H(+)(out). NDH-1 shuttles electrons from an unknown electron donor, via FMN and iron-sulfur (Fe-S) centers, to quinones in the respiratory and/or the photosynthetic chain. The immediate electron acceptor for the enzyme in this species is believed to be plastoquinone. Couples the redox reaction to proton translocation, and thus conserves the redox energy in a proton gradient. Cyanobacterial NDH-1 also plays a role in inorganic carbon-concentration. This is NAD(P)H-quinone oxidoreductase subunit O from Microcystis aeruginosa (strain NIES-843 / IAM M-2473).